A 383-amino-acid chain; its full sequence is WD repeat-containing protein 55 (383 aa).

Residues Met1 to Glu11 are compositionally biased toward basic and acidic residues. The interval Met1–Glu33 is disordered. Residues Asp12–Ser21 are compositionally biased toward acidic residues. Position 14 is a phosphoserine (Ser14). 7 WD repeats span residues Val36–Lys75, His82–Arg121, Ala125–Asp163, Gln166–Leu205, Pro208–Asp247, Ala250–Ser289, and His293–Val332. Ser354 is subject to Phosphoserine. A disordered region spans residues Arg363 to Asp383. Acidic residues predominate over residues Glu365 to Asp383. Residue Thr378 is modified to Phosphothreonine. Ser382 is modified (phosphoserine).

Belongs to the WD repeat WDR55 family.

The protein localises to the nucleus. It is found in the nucleolus. It localises to the cytoplasm. Its function is as follows. Nucleolar protein that acts as a modulator of rRNA synthesis. Plays a central role during organogenesis. In Homo sapiens (Human), this protein is WD repeat-containing protein 55 (WDR55).